Reading from the N-terminus, the 207-residue chain is Small ribosomal subunit protein uS3 (207 aa).

The KH type-2 domain maps to 17–86 (IDEYLEKELR…NPQIEVEEIK (70 aa)).

It belongs to the universal ribosomal protein uS3 family. Part of the 30S ribosomal subunit.

Its function is as follows. Binds the lower part of the 30S subunit head. This Thermococcus sibiricus (strain DSM 12597 / MM 739) protein is Small ribosomal subunit protein uS3.